The primary structure comprises 600 residues: Polypeptide N-acetylgalactosaminyltransferase (600 aa).

Topologically, residues 1 to 7 are cytoplasmic; sequence MVRRKLR. The chain crosses the membrane as a helical; Signal-anchor for type II membrane protein span at residues 8–28; it reads LLVILAGIWLVGIVVYLFKGD. Topologically, residues 29-600 are lumenal; it reads DQSEFEKRVI…KWTFSLSKNR (572 aa). 5 cysteine pairs are disulfide-bonded: Cys-154/Cys-382, Cys-373/Cys-451, Cys-484/Cys-501, Cys-524/Cys-541, and Cys-567/Cys-583. The segment at 163-268 is catalytic subdomain A; the sequence is LPDTSVIITF…EKWLEPLLDR (106 aa). Residues Thr-171, Asp-204, and Arg-229 each coordinate substrate. Residue Asp-252 participates in Mn(2+) binding. Residue Ser-253 coordinates substrate. A Mn(2+)-binding site is contributed by His-254. Residues 328-390 are catalytic subdomain B; it reads PIRTPMIAGG…PCSRVGHVFR (63 aa). Trp-359 contributes to the substrate binding site. His-387 is a binding site for Mn(2+). Positions 390, 393, and 395 each coordinate substrate. The 130-residue stretch at 466–595 folds into the Ricin B-type lectin domain; sequence KIPSVQDIAF…SSYTQKWTFS (130 aa).

Belongs to the glycosyltransferase 2 family. GalNAc-T subfamily. The cofactor is Mn(2+). Post-translationally, O-glycosylated.

The protein resides in the golgi apparatus membrane. The enzyme catalyses L-seryl-[protein] + UDP-N-acetyl-alpha-D-galactosamine = a 3-O-[N-acetyl-alpha-D-galactosaminyl]-L-seryl-[protein] + UDP + H(+). It carries out the reaction L-threonyl-[protein] + UDP-N-acetyl-alpha-D-galactosamine = a 3-O-[N-acetyl-alpha-D-galactosaminyl]-L-threonyl-[protein] + UDP + H(+). Its pathway is protein modification; protein glycosylation. With respect to regulation, no change in activity by addition of up to 10% methanol or glycerol, or 5% acetonitrile. 40% reduction in activity by 10% acetonitrile or by lyophilization. Activity requires divalent cations, the best being Mn(2+) (10-20 mM), followed by Co(2+), Mg(2+) and Ca(2+). Loss of activity with Cu(2+) or in the presence of EDTA. Inhibited by UDP, but not by UMP, UTP, ADP or GDP nucleotides. No inhibition by galactose, N-acetylglucosamine or N-acetylgalactosamine sugars. In terms of biological role, catalyzes the initial reaction in O-linked oligosaccharide biosynthesis, the transfer of an N-acetyl-D-galactosamine residue to a serine or threonine residue on the protein receptor. Has a broad substrate specificity. Acceptor peptides include Muc2, Muc5Ac, Muc1a and Muc1a', with Muc2 as the best acceptor. Acts on non-glycosylated and mono- or multi-glycosylated peptide substrates. Transfers preferably to threonine rather than serine residue. Thr-15 is the most preferred site of glycosylation in Muc2 peptide PTTTPITTTTTVTPTPTPTGTQTK having proline residues at position -1, and at positions +1 and +3, where the number represents the distance from the C-terminal and N-terminal hydroxyl amino acid, respectively. Transfer of the N-acetyl-D-galactosamine (GalNAc) is optimal with proline residues at positions -3, -1, +1 and +3, but other amino acids are tolerated, although some, such as phenylalanine, isoleucine or leucine at -1, or lysine at +3 prevent the transfer completely. Second GalNAc is transferred to Muc2 Thr-2 or Thr-13, both of which have two proline residues nearby. Up to nine sites can be glycosylated within Muc2, but eight are used simultaneously since Thr-19 and Thr-21 are not detected to be glycosylated at the same time. Glycosylation is not detected of a potential site, which is next to an already glycosylated site, but only one amino acid is needed in between two glycosylation sites. Ser-5 is the preferred glycosylation site in Muc5Ac peptide GTTPSPVPTTSTTSAP into which up to four GalNAcs can be attached. Only the threonine residues are detected as pontential glycosylation sites in Muc1a APPAHGVTSAPDTRPAPGC and Muc1a' AHGVTSAPDTR peptides. Transferase activity is restricted to UDP-GalNAc as a donor, and none of the nucleotide sugars UDP-Gal, UDP-GlcNAc, GDP-fucose, UDP-xylose, UDP-glucuronic acid or CMP-neuraminic acid are utilized as donors. This chain is Polypeptide N-acetylgalactosaminyltransferase, found in Biomphalaria glabrata (Bloodfluke planorb).